A 419-amino-acid chain; its full sequence is MSHPNTHMPRTHAVHGRAAPQRRGCRTSVEKTDQSGHSRSSLAESAMEQAQLRSRGEAGGGRSVLCASGEPGSAHKWAGAVTCSGAEEQPLHWAESRARGLARHLHYWELPYAWRENRYIIYGHRFYHSHRKSLLSVLNAYGWHNETINIWSHLVGAAVLAYLLCWGWPRSDVYRAAQVPRLAKWAIGAFLACGVKCMASSVAWHTFNGTCHLKLRSRFVCVDYTGITLLVTASVVTTVAVTLYGLSRPLMYAYMVASIGLGTAAGVMNWSPHFDRPEARPLRIAVYVGLAALGLVSFVHVWMQVRWASAHLMAPLVYKSLVWYGIGVVFYATLVPERWRSDVTLDCCSGPVHEAACRQFRDLPPVARKDRQFWSLWWVDYFCHSHFLWHVFVVLGVVGHYRAVLQMSRIVWLDAGRAF.

The interval 1–65 (MSHPNTHMPR…GEAGGGRSVL (65 aa)) is disordered. At 1–147 (MSHPNTHMPR…LNAYGWHNET (147 aa)) the chain is on the lumenal side. Residue Asn145 is glycosylated (N-linked (GlcNAc...) asparagine). A helical membrane pass occupies residues 148-168 (INIWSHLVGAAVLAYLLCWGW). Residues 169–184 (PRSDVYRAAQVPRLAK) are Cytoplasmic-facing. Residues 185-205 (WAIGAFLACGVKCMASSVAWH) form a helical membrane-spanning segment. The Lumenal portion of the chain corresponds to 206–225 (TFNGTCHLKLRSRFVCVDYT). N-linked (GlcNAc...) asparagine glycosylation occurs at Asn208. A helical membrane pass occupies residues 226-246 (GITLLVTASVVTTVAVTLYGL). The Cytoplasmic segment spans residues 247 to 249 (SRP). A helical membrane pass occupies residues 250–270 (LMYAYMVASIGLGTAAGVMNW). Residues 271–283 (SPHFDRPEARPLR) are Lumenal-facing. Residues 284-304 (IAVYVGLAALGLVSFVHVWMQ) form a helical membrane-spanning segment. The Cytoplasmic segment spans residues 305 to 311 (VRWASAH). Residues 312–332 (LMAPLVYKSLVWYGIGVVFYA) form a helical membrane-spanning segment. Residues 333 to 377 (TLVPERWRSDVTLDCCSGPVHEAACRQFRDLPPVARKDRQFWSLW) lie on the Lumenal side of the membrane. The chain crosses the membrane as a helical span at residues 378–398 (WVDYFCHSHFLWHVFVVLGVV). At 399–419 (GHYRAVLQMSRIVWLDAGRAF) the chain is on the cytoplasmic side.

It belongs to the ADIPOR family.

Its subcellular location is the endoplasmic reticulum membrane. Functionally, ADIPOR-like receptor involved in zinc metabolism either by altering membrane sterol content or by directly altering cellular zinc levels. The polypeptide is ADIPOR-like receptor IZH3 (IZH3) (Eremothecium gossypii (strain ATCC 10895 / CBS 109.51 / FGSC 9923 / NRRL Y-1056) (Yeast)).